The following is a 359-amino-acid chain: Phosphoserine aminotransferase (359 aa).

R41 is an L-glutamate binding site. Pyridoxal 5'-phosphate-binding positions include 75–76, W101, T152, D171, and Q194; that span reads AS. An N6-(pyridoxal phosphate)lysine modification is found at K195. 236–237 is a binding site for pyridoxal 5'-phosphate; the sequence is NT.

Belongs to the class-V pyridoxal-phosphate-dependent aminotransferase family. SerC subfamily. Homodimer. Pyridoxal 5'-phosphate serves as cofactor.

Its subcellular location is the cytoplasm. It carries out the reaction O-phospho-L-serine + 2-oxoglutarate = 3-phosphooxypyruvate + L-glutamate. It catalyses the reaction 4-(phosphooxy)-L-threonine + 2-oxoglutarate = (R)-3-hydroxy-2-oxo-4-phosphooxybutanoate + L-glutamate. Its pathway is amino-acid biosynthesis; L-serine biosynthesis; L-serine from 3-phospho-D-glycerate: step 2/3. The protein operates within cofactor biosynthesis; pyridoxine 5'-phosphate biosynthesis; pyridoxine 5'-phosphate from D-erythrose 4-phosphate: step 3/5. Its function is as follows. Catalyzes the reversible conversion of 3-phosphohydroxypyruvate to phosphoserine and of 3-hydroxy-2-oxo-4-phosphonooxybutanoate to phosphohydroxythreonine. This chain is Phosphoserine aminotransferase, found in Acinetobacter baylyi (strain ATCC 33305 / BD413 / ADP1).